Consider the following 2090-residue polypeptide: Ninein (2090 aa).

EF-hand domains are found at residues 8-43 (QHEA…LSLE) and 42-77 (LEEV…ILSR). Phosphoserine is present on S152. EF-hand domains follow at residues 182-217 (WIEE…YGLQ) and 219-252 (VDGE…NGKS). 245–252 (GLFKNGKS) serves as a coordination point for GTP. Position 269 is a phosphoserine (S269). 300 to 304 (DGMGH) lines the GTP pocket. Residues 317-352 (EGIENSQEILKALDFSLDGNINLTELTLALENELLV) enclose the EF-hand 5 domain. Residues 357 to 570 (IHQAALASFK…YRAQGRVLRL (214 aa)) are a coiled coil. Residue 420–423 (RKLD) participates in GTP binding. Residues 574 to 595 (NSPSEEVEANSGGIEPEHGLGS) are disordered. 4 coiled-coil regions span residues 625–1027 (LRLE…QATS), 1068–1099 (LSLQ…QKLE), 1181–1341 (SELE…SVVQ), and 1441–1816 (QDKH…AGGK). Residues 802-1505 (KMETECNRRT…HDLQITCSEM (704 aa)) are important for interaction with CEP170. The disordered stretch occupies residues 1152–1190 (VRDLGSTGTSSVQRQEVKIEESEASVEGFSELENSEETR). S1550 and S1837 each carry phosphoserine. Coiled coils occupy residues 1854–1885 (QENE…SNLL) and 1922–2067 (ANRK…QVSL).

As to quaternary structure, homooligomer. Interacts with GSK3B/GSK3-beta via its C-terminal domain. Interacts with C14ORF166, such interaction may prevent its phosphorylation by GSK3B. Interacts with AUNIP (via N-terminus). Identified in a complex with AUNIP and AURKA. Interacts with CCDC120. Interacts (via C-terminus) with CEP250. Interacts with CEP170. Interacts with the gamma-tubulin ring complex component TUBGCP3. Interacts with gamma-tubulin. Isoform 6 does not interact with CEP170 or CEP250. Phosphorylated by AURKA/Aurora kinase A and PKA kinases but not CK2 or AURKB/ Aurora kinase B. As to expression, ubiquitous. Highly expressed in heart and skeletal muscle. Isoform 1 is more expressed than isoform 5.

It is found in the cytoplasm. The protein localises to the cytoskeleton. It localises to the microtubule organizing center. The protein resides in the centrosome. Its subcellular location is the centriole. Its function is as follows. Centrosomal protein required in the positioning and anchorage of the microtubule minus-end in epithelial cells. May also act as a centrosome maturation factor. May play a role in microtubule nucleation, by recruiting the gamma-tubulin ring complex to the centrosome. Overexpression does not perturb nucleation or elongation of microtubules but suppresses release of microtubules. Required for centriole organization and microtubule anchoring at the mother centriole. In Homo sapiens (Human), this protein is Ninein (NIN).